The following is a 404-amino-acid chain: Probable tRNA sulfurtransferase (404 aa).

Residues 60 to 165 (HEVAESLKEI…DEAAYISYEN (106 aa)) enclose the THUMP domain. Residues 183–184 (ML), 208–209 (HF), Arg265, Gly287, and Gln296 contribute to the ATP site.

Belongs to the ThiI family.

Its subcellular location is the cytoplasm. The catalysed reaction is [ThiI sulfur-carrier protein]-S-sulfanyl-L-cysteine + a uridine in tRNA + 2 reduced [2Fe-2S]-[ferredoxin] + ATP + H(+) = [ThiI sulfur-carrier protein]-L-cysteine + a 4-thiouridine in tRNA + 2 oxidized [2Fe-2S]-[ferredoxin] + AMP + diphosphate. It carries out the reaction [ThiS sulfur-carrier protein]-C-terminal Gly-Gly-AMP + S-sulfanyl-L-cysteinyl-[cysteine desulfurase] + AH2 = [ThiS sulfur-carrier protein]-C-terminal-Gly-aminoethanethioate + L-cysteinyl-[cysteine desulfurase] + A + AMP + 2 H(+). Its pathway is cofactor biosynthesis; thiamine diphosphate biosynthesis. Catalyzes the ATP-dependent transfer of a sulfur to tRNA to produce 4-thiouridine in position 8 of tRNAs, which functions as a near-UV photosensor. Also catalyzes the transfer of sulfur to the sulfur carrier protein ThiS, forming ThiS-thiocarboxylate. This is a step in the synthesis of thiazole, in the thiamine biosynthesis pathway. The sulfur is donated as persulfide by IscS. In Streptococcus agalactiae serotype III (strain NEM316), this protein is Probable tRNA sulfurtransferase.